The following is a 274-amino-acid chain: Tryptophan synthase alpha chain (274 aa).

Residues Glu49 and Asp60 each act as proton acceptor in the active site.

This sequence belongs to the TrpA family. As to quaternary structure, tetramer of two alpha and two beta chains.

The enzyme catalyses (1S,2R)-1-C-(indol-3-yl)glycerol 3-phosphate + L-serine = D-glyceraldehyde 3-phosphate + L-tryptophan + H2O. The protein operates within amino-acid biosynthesis; L-tryptophan biosynthesis; L-tryptophan from chorismate: step 5/5. In terms of biological role, the alpha subunit is responsible for the aldol cleavage of indoleglycerol phosphate to indole and glyceraldehyde 3-phosphate. The sequence is that of Tryptophan synthase alpha chain from Alkalilimnicola ehrlichii (strain ATCC BAA-1101 / DSM 17681 / MLHE-1).